A 67-amino-acid polypeptide reads, in one-letter code: Large ribosomal subunit protein bL35 (67 aa).

The protein belongs to the bacterial ribosomal protein bL35 family.

The polypeptide is Large ribosomal subunit protein bL35 (Deinococcus geothermalis (strain DSM 11300 / CIP 105573 / AG-3a)).